The chain runs to 238 residues: Pyridoxine 5'-phosphate synthase (238 aa).

Residues Asn-7 and Arg-18 each contribute to the 3-amino-2-oxopropyl phosphate site. The Proton acceptor role is filled by His-43. 2 residues coordinate 1-deoxy-D-xylulose 5-phosphate: Arg-45 and His-50. The active-site Proton acceptor is the Glu-70. Thr-100 lines the 1-deoxy-D-xylulose 5-phosphate pocket. Residue His-190 is the Proton donor of the active site. 3-amino-2-oxopropyl phosphate contacts are provided by residues Asp-191 and 213–214 (GH).

It belongs to the PNP synthase family. In terms of assembly, homooctamer; tetramer of dimers.

The protein localises to the cytoplasm. The enzyme catalyses 3-amino-2-oxopropyl phosphate + 1-deoxy-D-xylulose 5-phosphate = pyridoxine 5'-phosphate + phosphate + 2 H2O + H(+). It participates in cofactor biosynthesis; pyridoxine 5'-phosphate biosynthesis; pyridoxine 5'-phosphate from D-erythrose 4-phosphate: step 5/5. In terms of biological role, catalyzes the complicated ring closure reaction between the two acyclic compounds 1-deoxy-D-xylulose-5-phosphate (DXP) and 3-amino-2-oxopropyl phosphate (1-amino-acetone-3-phosphate or AAP) to form pyridoxine 5'-phosphate (PNP) and inorganic phosphate. This is Pyridoxine 5'-phosphate synthase from Cytophaga hutchinsonii (strain ATCC 33406 / DSM 1761 / CIP 103989 / NBRC 15051 / NCIMB 9469 / D465).